Consider the following 471-residue polypeptide: Anthocyanidin 3-O-glucosyltransferase (471 aa).

His-24 functions as the Proton acceptor in the catalytic mechanism. His-24 is an an anthocyanidin binding site. The active-site Charge relay is the Asp-130. A UDP-alpha-D-glucose-binding site is contributed by Thr-152. His-161 contributes to the an anthocyanidin binding site. UDP-alpha-D-glucose-binding residues include Ala-352, Gln-354, His-369, Trp-372, Ser-374, and Glu-377. Gly-392 is an an anthocyanidin binding site. Residues Asp-393 and Gln-394 each contribute to the UDP-alpha-D-glucose site.

This sequence belongs to the UDP-glycosyltransferase family.

The catalysed reaction is an anthocyanidin + UDP-alpha-D-glucose + H(+) = an anthocyanidin 3-O-beta-D-glucoside + UDP. It participates in pigment biosynthesis; anthocyanin biosynthesis. Its function is as follows. In the presence of other necessary color factors, this glycosylation reaction allows the accumulation of anthocyanin pigments. This Zea mays (Maize) protein is Anthocyanidin 3-O-glucosyltransferase (BZ1).